The sequence spans 80 residues: MKTGVKKLKVHVKKNDMVTVISGNDKGKSGKVLRVYPVKGRVIVEGVNIRKRHMRPTQSSPQGQIIEREFPVHASNVKKG.

The protein belongs to the universal ribosomal protein uL24 family. In terms of assembly, part of the 50S ribosomal subunit.

Its function is as follows. One of two assembly initiator proteins, it binds directly to the 5'-end of the 23S rRNA, where it nucleates assembly of the 50S subunit. Functionally, one of the proteins that surrounds the polypeptide exit tunnel on the outside of the subunit. The sequence is that of Large ribosomal subunit protein uL24 from Chlorobium phaeovibrioides (strain DSM 265 / 1930) (Prosthecochloris vibrioformis (strain DSM 265)).